Here is a 470-residue protein sequence, read N- to C-terminus: Argininosuccinate lyase (470 aa).

The protein belongs to the lyase 1 family. Argininosuccinate lyase subfamily.

Its subcellular location is the cytoplasm. It carries out the reaction 2-(N(omega)-L-arginino)succinate = fumarate + L-arginine. It functions in the pathway amino-acid biosynthesis; L-arginine biosynthesis; L-arginine from L-ornithine and carbamoyl phosphate: step 3/3. This Mycobacterium sp. (strain MCS) protein is Argininosuccinate lyase.